The following is an 882-amino-acid chain: Alanine--tRNA ligase (882 aa).

4 residues coordinate Zn(2+): H564, H568, C666, and H670.

It belongs to the class-II aminoacyl-tRNA synthetase family. Zn(2+) serves as cofactor.

The protein resides in the cytoplasm. The catalysed reaction is tRNA(Ala) + L-alanine + ATP = L-alanyl-tRNA(Ala) + AMP + diphosphate. Functionally, catalyzes the attachment of alanine to tRNA(Ala) in a two-step reaction: alanine is first activated by ATP to form Ala-AMP and then transferred to the acceptor end of tRNA(Ala). Also edits incorrectly charged Ser-tRNA(Ala) and Gly-tRNA(Ala) via its editing domain. This chain is Alanine--tRNA ligase, found in Rubrobacter xylanophilus (strain DSM 9941 / JCM 11954 / NBRC 16129 / PRD-1).